Here is a 545-residue protein sequence, read N- to C-terminus: ATP synthase subunit alpha, mitochondrial (545 aa).

The N-terminal 35 residues, Met1–Leu35, are a transit peptide targeting the mitochondrion. 2 positions are modified to phosphoserine: Ser57 and Ser178. ATP is bound at residue Gly206–Thr213.

The protein belongs to the ATPase alpha/beta chains family. As to quaternary structure, F-type ATPases have 2 components, CF(1) - the catalytic core - and CF(0) - the membrane proton channel. CF(1) has five subunits: alpha(3), beta(3), gamma(1), delta(1), epsilon(1). CF(0) has three main subunits: a, b and c.

It localises to the mitochondrion inner membrane. Functionally, mitochondrial membrane ATP synthase (F(1)F(0) ATP synthase or Complex V) produces ATP from ADP in the presence of a proton gradient across the membrane which is generated by electron transport complexes of the respiratory chain. F-type ATPases consist of two structural domains, F(1) - containing the extramembraneous catalytic core, and F(0) - containing the membrane proton channel, linked together by a central stalk and a peripheral stalk. During catalysis, ATP synthesis in the catalytic domain of F(1) is coupled via a rotary mechanism of the central stalk subunits to proton translocation. Subunits alpha and beta form the catalytic core in F(1). Rotation of the central stalk against the surrounding alpha(3)beta(3) subunits leads to hydrolysis of ATP in three separate catalytic sites on the beta subunits. Subunit alpha does not bear the catalytic high-affinity ATP-binding sites. The protein is ATP synthase subunit alpha, mitochondrial (ATP1) of Saccharomyces cerevisiae (strain ATCC 204508 / S288c) (Baker's yeast).